A 297-amino-acid chain; its full sequence is tRNA dimethylallyltransferase (297 aa).

Residue 15–22 (GPTASGKS) participates in ATP binding. 17 to 22 (TASGKS) contacts substrate. Interaction with substrate tRNA stretches follow at residues 40–43 (DSMQ) and 164–168 (QRIVR).

The protein belongs to the IPP transferase family. In terms of assembly, monomer. The cofactor is Mg(2+).

It catalyses the reaction adenosine(37) in tRNA + dimethylallyl diphosphate = N(6)-dimethylallyladenosine(37) in tRNA + diphosphate. Catalyzes the transfer of a dimethylallyl group onto the adenine at position 37 in tRNAs that read codons beginning with uridine, leading to the formation of N6-(dimethylallyl)adenosine (i(6)A). This Rhizobium etli (strain ATCC 51251 / DSM 11541 / JCM 21823 / NBRC 15573 / CFN 42) protein is tRNA dimethylallyltransferase.